The primary structure comprises 140 residues: Large ribosomal subunit protein uL11 (140 aa).

The protein belongs to the universal ribosomal protein uL11 family. Part of the ribosomal stalk of the 50S ribosomal subunit. Interacts with L10 and the large rRNA to form the base of the stalk. L10 forms an elongated spine to which L12 dimers bind in a sequential fashion forming a multimeric L10(L12)X complex. In terms of processing, one or more lysine residues are methylated.

Its function is as follows. Forms part of the ribosomal stalk which helps the ribosome interact with GTP-bound translation factors. The protein is Large ribosomal subunit protein uL11 of Dehalococcoides mccartyi (strain ATCC BAA-2266 / KCTC 15142 / 195) (Dehalococcoides ethenogenes (strain 195)).